The primary structure comprises 440 residues: tRNA (guanine(37)-N(1))-methyltransferase (440 aa).

S-adenosyl-L-methionine contacts are provided by residues histidine 217, 255 to 256 (DL), 283 to 284 (DG), and asparagine 315.

It belongs to the class I-like SAM-binding methyltransferase superfamily. TRM5/TYW2 family. As to quaternary structure, monomer.

It is found in the mitochondrion matrix. Its subcellular location is the nucleus. It localises to the cytoplasm. The enzyme catalyses guanosine(37) in tRNA + S-adenosyl-L-methionine = N(1)-methylguanosine(37) in tRNA + S-adenosyl-L-homocysteine + H(+). Its function is as follows. Specifically methylates the N1 position of guanosine-37 in various cytoplasmic and mitochondrial tRNAs. Methylation is not dependent on the nature of the nucleoside 5' of the target nucleoside. This is the first step in the biosynthesis of wybutosine (yW), a modified base adjacent to the anticodon of tRNAs and required for accurate decoding. The chain is tRNA (guanine(37)-N(1))-methyltransferase from Drosophila pseudoobscura pseudoobscura (Fruit fly).